Here is a 791-residue protein sequence, read N- to C-terminus: uncharacterized protein (791 aa).

The tract at residues 267 to 288 (APGESSAQSSYEQSTRAGDSAP) is disordered. The segment covering 271–283 (SSAQSSYEQSTRA) has biased composition (polar residues).

This is an uncharacterized protein from Treponema pallidum (strain Nichols).